The following is a 109-amino-acid chain: MSNLNPCMTCGACCAFFRVSFYWAEADDAGGTIPARLTEQISPFHRCMSGTNQKNPRCIALAGTPGKNACCTIYKNRSSTCREFAMSGENGVVNEACNRARAKYGLTPL.

The protein to A.calcoaceticus putative ferredoxin.

This is an uncharacterized protein from Escherichia coli O157:H7.